The chain runs to 366 residues: Endogenous Bornavirus-like nucleoprotein 1 (366 aa).

The segment covering 1–15 (MSRPRNNPQTSSPQD) has biased composition (polar residues). The disordered stretch occupies residues 1 to 22 (MSRPRNNPQTSSPQDSTKDGSS).

In terms of tissue distribution, expression detected by RT-PCR in a few cell lines, including OL, HEK293T and MOLT-4. Not observed in HeLa cells.

In terms of biological role, may act as an RNA-binding protein. Highly homologous to the bornavirus nucleocapsid N protein that binds viral RNA and oligomerizes. This is Endogenous Bornavirus-like nucleoprotein 1 (EBLN1) from Homo sapiens (Human).